The sequence spans 336 residues: Isopentenyl-diphosphate delta-isomerase (336 aa).

5 to 6 contacts substrate; sequence RK. FMN-binding positions include 60-62, S90, and N117; that span reads AMT. Q147 is a substrate binding site. A Mg(2+)-binding site is contributed by E148. FMN contacts are provided by residues K179, S204, T209, 253 to 255, and 274 to 275; these read GVR and SR.

Belongs to the IPP isomerase type 2 family. In terms of assembly, homooctamer. Dimer of tetramers. FMN is required as a cofactor. It depends on NADPH as a cofactor. Mg(2+) serves as cofactor.

The protein resides in the cytoplasm. It carries out the reaction isopentenyl diphosphate = dimethylallyl diphosphate. Involved in the biosynthesis of isoprenoids. Catalyzes the 1,3-allylic rearrangement of the homoallylic substrate isopentenyl (IPP) to its allylic isomer, dimethylallyl diphosphate (DMAPP). The chain is Isopentenyl-diphosphate delta-isomerase from Streptococcus pneumoniae (strain 70585).